Here is a 413-residue protein sequence, read N- to C-terminus: Serine hydroxymethyltransferase (413 aa).

Residues leucine 119 and 123–125 each bind (6S)-5,6,7,8-tetrahydrofolate; that span reads GHL. Residue lysine 228 is modified to N6-(pyridoxal phosphate)lysine. Glutamate 243 is a (6S)-5,6,7,8-tetrahydrofolate binding site.

This sequence belongs to the SHMT family. Homodimer. It depends on pyridoxal 5'-phosphate as a cofactor.

The protein localises to the cytoplasm. It carries out the reaction (6R)-5,10-methylene-5,6,7,8-tetrahydrofolate + glycine + H2O = (6S)-5,6,7,8-tetrahydrofolate + L-serine. The protein operates within one-carbon metabolism; tetrahydrofolate interconversion. Its pathway is amino-acid biosynthesis; glycine biosynthesis; glycine from L-serine: step 1/1. Functionally, catalyzes the reversible interconversion of serine and glycine with tetrahydrofolate (THF) serving as the one-carbon carrier. This reaction serves as the major source of one-carbon groups required for the biosynthesis of purines, thymidylate, methionine, and other important biomolecules. Also exhibits THF-independent aldolase activity toward beta-hydroxyamino acids, producing glycine and aldehydes, via a retro-aldol mechanism. This Desulforamulus reducens (strain ATCC BAA-1160 / DSM 100696 / MI-1) (Desulfotomaculum reducens) protein is Serine hydroxymethyltransferase.